We begin with the raw amino-acid sequence, 562 residues long: Protoporphyrinogen oxidase 1, chloroplastic (562 aa).

Residues 1–48 (MSAMALSSTMALSLPQSSMSLSHCRHNRITILIPSSSLRRRGGSSIRC) constitute a chloroplast transit peptide. FAD is bound by residues 88-93 (GGGISG), 115-116 (EA), and 137-140 (GPNS). Residues 274 to 302 (TLKTIQERKDNPKPPRDPRLPKPKGQTVG) form a disordered region. The span at 278–293 (IQERKDNPKPPRDPRL) shows a compositional bias: basic and acidic residues. FAD is bound by residues V323 and 536–538 (VAL).

This sequence belongs to the protoporphyrinogen/coproporphyrinogen oxidase family. Protoporphyrinogen oxidase subfamily. The cofactor is FAD.

The protein resides in the plastid. Its subcellular location is the chloroplast thylakoid membrane. The protein localises to the chloroplast inner membrane. It catalyses the reaction protoporphyrinogen IX + 3 O2 = protoporphyrin IX + 3 H2O2. It participates in porphyrin-containing compound metabolism; protoporphyrin-IX biosynthesis; protoporphyrin-IX from protoporphyrinogen-IX: step 1/1. The protein operates within porphyrin-containing compound metabolism; chlorophyll biosynthesis. Catalyzes the 6-electron oxidation of protoporphyrinogen-IX to form protoporphyrin-IX. This chain is Protoporphyrinogen oxidase 1, chloroplastic, found in Spinacia oleracea (Spinach).